Here is a 335-residue protein sequence, read N- to C-terminus: Protein-lysine N-methyltransferase EEF2KMT (335 aa).

An N-acetylmethionine modification is found at Met1. S-adenosyl-L-methionine contacts are provided by residues Trp139, Gly165–Gly167, Trp228, and Ala247.

The protein belongs to the class I-like SAM-binding methyltransferase superfamily. EEF2KMT family. As to quaternary structure, interacts with FAM86B2 and FAM86C1P.

It is found in the cytoplasm. It catalyses the reaction L-lysyl-[protein] + 3 S-adenosyl-L-methionine = N(6),N(6),N(6)-trimethyl-L-lysyl-[protein] + 3 S-adenosyl-L-homocysteine + 3 H(+). Catalyzes the trimethylation of eukaryotic elongation factor 2 (EEF2) on 'Lys-525'. The polypeptide is Protein-lysine N-methyltransferase EEF2KMT (Eef2kmt) (Mus musculus (Mouse)).